An 85-amino-acid chain; its full sequence is MALSTRIQAACLLLLLLASVASVSVLPHQTGQLTDLRAQDTAGAEAGLQPTLQLRRLRRRDTHFPICIFCCGCCKTPKCGLCCKT.

A signal peptide spans 1-22; the sequence is MALSTRIQAACLLLLLLASVAS. The propeptide occupies 23-54; the sequence is VSVLPHQTGQLTDLRAQDTAGAEAGLQPTLQL. Disulfide bonds link C67-C83, C70-C73, C71-C79, and C74-C82.

It belongs to the hepcidin family. Interacts with SLC40A1; this interaction promotes SLC40A1 rapid ubiquitination.

The protein localises to the secreted. In terms of biological role, liver-produced hormone that constitutes the main circulating regulator of iron absorption and distribution across tissues. Acts by promoting endocytosis and degradation of ferroportin/SLC40A1, leading to the retention of iron in iron-exporting cells and decreased flow of iron into plasma. Controls the major flows of iron into plasma: absorption of dietary iron in the intestine, recycling of iron by macrophages, which phagocytose old erythrocytes and other cells, and mobilization of stored iron from hepatocytes. Its function is as follows. Has strong antimicrobial activity against E.coli ML35P N.cinerea and weaker against S.epidermidis, S.aureus and group b streptococcus bacteria. Active against the fungus C.albicans. No activity against P.aeruginosa. This chain is Hepcidin (HAMP), found in Canis lupus familiaris (Dog).